A 58-amino-acid polypeptide reads, in one-letter code: U-scoloptoxin(14)-Sa1a (58 aa).

The signal sequence occupies residues 1 to 18; sequence MNRILGMIFLFCLISCYA.

Belongs to the scoloptoxin-14 family. Contains 4 disulfide bonds. As to expression, expressed by the venom gland.

The protein localises to the secreted. The protein is U-scoloptoxin(14)-Sa1a of Scolopendra alternans (Florida Keys giant centipede).